The chain runs to 334 residues: GTPase Obg (334 aa).

In terms of domain architecture, Obg spans 1–159; the sequence is MKFVDSASVR…REIGLELSVM (159 aa). The 173-residue stretch at 160–332 folds into the OBG-type G domain; it reads ADIGLLGIPN…LVAGLFKLVL (173 aa). GTP-binding positions include 166 to 173, 191 to 195, 212 to 215, 282 to 285, and 313 to 315; these read GIPNAGKS, FTTLH, DIPG, NKID, and SAL. Mg(2+) is bound by residues S173 and T193.

This sequence belongs to the TRAFAC class OBG-HflX-like GTPase superfamily. OBG GTPase family. In terms of assembly, monomer. It depends on Mg(2+) as a cofactor.

It localises to the cytoplasm. In terms of biological role, an essential GTPase which binds GTP, GDP and possibly (p)ppGpp with moderate affinity, with high nucleotide exchange rates and a fairly low GTP hydrolysis rate. Plays a role in control of the cell cycle, stress response, ribosome biogenesis and in those bacteria that undergo differentiation, in morphogenesis control. The sequence is that of GTPase Obg from Vesicomyosocius okutanii subsp. Calyptogena okutanii (strain HA).